We begin with the raw amino-acid sequence, 314 residues long: Lipoyl synthase (314 aa).

[4Fe-4S] cluster-binding residues include C61, C66, C72, C87, C91, C94, and S301. The 218-residue stretch at 73–290 (FGRGTATFMI…ERIATNLGFS (218 aa)) folds into the Radical SAM core domain.

Belongs to the radical SAM superfamily. Lipoyl synthase family. Requires [4Fe-4S] cluster as cofactor.

It is found in the cytoplasm. The catalysed reaction is [[Fe-S] cluster scaffold protein carrying a second [4Fe-4S](2+) cluster] + N(6)-octanoyl-L-lysyl-[protein] + 2 oxidized [2Fe-2S]-[ferredoxin] + 2 S-adenosyl-L-methionine + 4 H(+) = [[Fe-S] cluster scaffold protein] + N(6)-[(R)-dihydrolipoyl]-L-lysyl-[protein] + 4 Fe(3+) + 2 hydrogen sulfide + 2 5'-deoxyadenosine + 2 L-methionine + 2 reduced [2Fe-2S]-[ferredoxin]. Its pathway is protein modification; protein lipoylation via endogenous pathway; protein N(6)-(lipoyl)lysine from octanoyl-[acyl-carrier-protein]: step 2/2. Its function is as follows. Catalyzes the radical-mediated insertion of two sulfur atoms into the C-6 and C-8 positions of the octanoyl moiety bound to the lipoyl domains of lipoate-dependent enzymes, thereby converting the octanoylated domains into lipoylated derivatives. This chain is Lipoyl synthase, found in Nitrosomonas eutropha (strain DSM 101675 / C91 / Nm57).